The chain runs to 984 residues: Calsyntenin-1 (984 aa).

Positions 1–18 are cleaved as a signal peptide; sequence MRTAYFIFVGALLGVSYA. The Extracellular portion of the chain corresponds to 19–850; it reads KHHHAARAPI…VGQGAIAGGA (832 aa). Cadherin domains are found at residues 66–142 and 143–257; these read YLLT…APEI and ENPW…APGV. Asparagine 206 and asparagine 305 each carry an N-linked (GlcNAc...) asparagine glycan. The chain crosses the membrane as a helical span at residues 851 to 871; that stretch reads VAVVVVVCVGFLLVLLVIGVL. The Cytoplasmic portion of the chain corresponds to 872–984; it reads KMRDTPMPRR…ISTNARSYRV (113 aa). A disordered region spans residues 878–959; that stretch reads MPRRRRQKRQ…QTEVLPHLDA (82 aa). A compositionally biased stretch (basic and acidic residues) spans 886–896; sequence RQSDGGMHWDD. The span at 918–951 shows a compositional bias: acidic residues; the sequence is EFSDEEEEEETDGESECSYRDEEDDVSEDEEDQT.

It belongs to the calsyntenin family. As to quaternary structure, interacts with isoform c of daf-2 (daf-2c); promoting daf-2c localization to synaptic regions. Interacts with klc-2. Interacts with unc-104. In terms of processing, a proportion of the protein is proteolytically cleaved before the transmembrane domain in neurons, leading to release in the extracellular space. In terms of tissue distribution, widely expressed in the nervous system. Highly expressed in many head neurons, including most amphid sensory neurons. Also expressed in other tissues, such as intestine and gonadal sheath cells.

The protein resides in the golgi apparatus membrane. The protein localises to the perikaryon. Its subcellular location is the cell projection. It localises to the axon. It is found in the secreted. The protein resides in the synaptic cleft. Its function is as follows. Cell adhesion molecule involved in associative learning and memory. Acts as a regulator of GABAergic synaptic transmission at neuromuscular junctions by regulating GABA synaptic vesicle precursor transport: possibly functions as a cargo adapter for unc-104-mediated transport of synaptic vesicle precursors. Promotes localization of isoform c of daf-2 (daf-2c) to synaptic regions by acting as a signaling adapter between klc-2 and daf-2c. Functionally, acts as aregulator of glutamate signaling in the sensory neurons by inhibiting the activity of command interneurons, thereby negatively regulating motor circuit activity and locomotion. This chain is Calsyntenin-1, found in Caenorhabditis elegans.